The primary structure comprises 148 residues: Large ribosomal subunit protein bL9 (148 aa).

The protein belongs to the bacterial ribosomal protein bL9 family.

Functionally, binds to the 23S rRNA. This is Large ribosomal subunit protein bL9 from Sulfurimonas denitrificans (strain ATCC 33889 / DSM 1251) (Thiomicrospira denitrificans (strain ATCC 33889 / DSM 1251)).